A 278-amino-acid chain; its full sequence is Non-haem bromoperoxidase BPO-A2 (278 aa).

The AB hydrolase-1 domain occupies 26–264 (PVVLIHGFPL…GAPHGLLWTH (239 aa)). Residues serine 99, aspartate 229, and histidine 258 contribute to the active site.

It belongs to the AB hydrolase superfamily. Bacterial non-heme haloperoxidase / perhydrolase family. Homotrimer.

Its function is as follows. May be a chlorinating enzyme involved in 7-chlorotetracycline biosynthesis. This is Non-haem bromoperoxidase BPO-A2 (bpoA2) from Kitasatospora aureofaciens (Streptomyces aureofaciens).